Consider the following 606-residue polypeptide: Aspartate--tRNA(Asp/Asn) ligase (606 aa).

Glu177 contacts L-aspartate. Positions 201–204 (QLFK) are aspartate. Position 223 (Arg223) interacts with L-aspartate. ATP is bound by residues 223–225 (RDE) and Gln232. His461 is a binding site for L-aspartate. Position 499 (Glu499) interacts with ATP. L-aspartate is bound at residue Arg506. Position 551-554 (551-554 (GMDR)) interacts with ATP.

Belongs to the class-II aminoacyl-tRNA synthetase family. Type 1 subfamily. As to quaternary structure, homodimer.

The protein resides in the cytoplasm. The enzyme catalyses tRNA(Asx) + L-aspartate + ATP = L-aspartyl-tRNA(Asx) + AMP + diphosphate. Aspartyl-tRNA synthetase with relaxed tRNA specificity since it is able to aspartylate not only its cognate tRNA(Asp) but also tRNA(Asn). Reaction proceeds in two steps: L-aspartate is first activated by ATP to form Asp-AMP and then transferred to the acceptor end of tRNA(Asp/Asn). The chain is Aspartate--tRNA(Asp/Asn) ligase from Prochlorococcus marinus (strain MIT 9303).